The following is a 463-amino-acid chain: L-seryl-tRNA(Sec) selenium transferase (463 aa).

Lys-294 carries the N6-(pyridoxal phosphate)lysine modification.

Belongs to the SelA family. Pyridoxal 5'-phosphate serves as cofactor.

It localises to the cytoplasm. The catalysed reaction is L-seryl-tRNA(Sec) + selenophosphate + H(+) = L-selenocysteinyl-tRNA(Sec) + phosphate. It participates in aminoacyl-tRNA biosynthesis; selenocysteinyl-tRNA(Sec) biosynthesis; selenocysteinyl-tRNA(Sec) from L-seryl-tRNA(Sec) (bacterial route): step 1/1. Functionally, converts seryl-tRNA(Sec) to selenocysteinyl-tRNA(Sec) required for selenoprotein biosynthesis. The protein is L-seryl-tRNA(Sec) selenium transferase of Hyphomonas neptunium (strain ATCC 15444).